A 301-amino-acid polypeptide reads, in one-letter code: Nucleotide-binding protein Rfer_1653 (301 aa).

Gly15–Ser22 contributes to the ATP binding site. Asp64–Thr67 provides a ligand contact to GTP.

This sequence belongs to the RapZ-like family.

Its function is as follows. Displays ATPase and GTPase activities. This is Nucleotide-binding protein Rfer_1653 from Albidiferax ferrireducens (strain ATCC BAA-621 / DSM 15236 / T118) (Rhodoferax ferrireducens).